The primary structure comprises 466 residues: Reticulophagy regulator 3 (466 aa).

The Cytoplasmic segment spans residues 1–80; it reads MEEAEGVAAA…WCLGLNAAFW (80 aa). The residue at position 26 (Ser26) is a Phosphoserine. A helical transmembrane segment spans residues 81-101; the sequence is FFALTSLRFVFLLAFSLMIIV. The Lumenal segment spans residues 102 to 168; sequence CIDQWKNKIW…LLFKKQNPGK (67 aa). The chain crosses the membrane as a helical span at residues 169–187; sequence FCLLSCGVLTFLAMLGRYI. The Cytoplasmic segment spans residues 188-192; it reads PGLLL. A helical transmembrane segment spans residues 193–211; sequence SYLMLVIIMMWPLAVYHRL. At 212–381 the chain is on the lumenal side; it reads WDRAYVRLKP…ASRNEAALPE (170 aa). Residues 244-263 are disordered; sequence RRRALHSERATDSHSDSEEE. Residues 248–259 are compositionally biased toward basic and acidic residues; the sequence is LHSERATDSHSD. Thr254 is subject to Phosphothreonine. 2 positions are modified to phosphoserine: Ser258 and Ser260. Thr283 carries the post-translational modification Phosphothreonine. Ser285, Ser288, Ser293, and Ser303 each carry phosphoserine. Residues 285–335 form a disordered region; it reads SEHSDAEVSCTENGTFNLSRGQTPLTEGSEDLDGHSDPEESFARDLPDFPS. Over residues 294-310 the composition is skewed to polar residues; the sequence is CTENGTFNLSRGQTPLT. Residues Thr307 and Thr310 each carry the phosphothreonine modification. Phosphoserine is present on residues Ser313, Ser320, and Ser360. The span at 316 to 331 shows a compositional bias: basic and acidic residues; sequence LDGHSDPEESFARDLP. Residues 382–401 form a helical membrane-spanning segment; it reads LLLSSLPGGSNLTSNLASLV. Topologically, residues 402 to 466 are cytoplasmic; the sequence is SQGMIQLALS…QLDPASSRSH (65 aa). The interval 412-444 is disordered; it reads EASQTDPSGPPPRRATRGFLRAPSSDLDTDAEG. Phosphothreonine is present on Thr440. The LIR motif motif lies at 445–450; it reads DDFELL.

It belongs to the RETREG family. Interacts with ATG8 family modifier proteins MAP1LC3A, MAP1LC3B, GABARAPL1 and GABARAPL2. Also interacts with ATG8 family modifier protein GABARAP. Interacts with CANX. Interacts with RTN4 isoform B. In terms of tissue distribution, widely expressed with highest levels in brain, lung, liver, muscle and spleen (protein level). Mainly expressed in the central nervous system and in parenchymatous organs including liver, lung and kidney.

The protein resides in the endoplasmic reticulum membrane. Endoplasmic reticulum (ER)-anchored autophagy regulator which exists in an inactive state under basal conditions but is activated following cellular stress. When activated, induces ER fragmentation and mediates ER delivery into lysosomes through sequestration into autophagosomes via interaction with ATG8 family proteins. Promotes ER membrane curvature and ER tubulation required for subsequent ER fragmentation and engulfment into autophagosomes. Required for collagen quality control in a LIR motif-dependent manner. Mediates NRF1-enhanced neurite outgrowth. The protein is Reticulophagy regulator 3 (Retreg3) of Mus musculus (Mouse).